Here is a 268-residue protein sequence, read N- to C-terminus: Undecaprenyl-diphosphatase (268 aa).

7 consecutive transmembrane segments (helical) span residues 47-67, 83-103, 109-129, 144-164, 184-204, 218-238, and 246-266; these read FAIL…FFKL, FIIG…IAGK, LFDP…LLWV, YPLM…IPGV, AAEF…VYDF, LIAI…KAFL, and FVLF…ALAL.

It belongs to the UppP family.

The protein resides in the cell inner membrane. The catalysed reaction is di-trans,octa-cis-undecaprenyl diphosphate + H2O = di-trans,octa-cis-undecaprenyl phosphate + phosphate + H(+). Its function is as follows. Catalyzes the dephosphorylation of undecaprenyl diphosphate (UPP). Confers resistance to bacitracin. The polypeptide is Undecaprenyl-diphosphatase (Bradyrhizobium sp. (strain ORS 278)).